A 110-amino-acid polypeptide reads, in one-letter code: Insulin (110 aa).

An N-terminal signal peptide occupies residues 1-24 (MALWMRLLPLLALLALWGPDPVPA). 3 cysteine pairs are disulfide-bonded: Cys-31-Cys-96, Cys-43-Cys-109, and Cys-95-Cys-100. A propeptide spans 57–87 (EAEDPQVGQVELGGGPGAGSLQPLALEGSLQ) (c peptide).

The protein belongs to the insulin family. As to quaternary structure, heterodimer of a B chain and an A chain linked by two disulfide bonds.

Its subcellular location is the secreted. Its function is as follows. Insulin decreases blood glucose concentration. It increases cell permeability to monosaccharides, amino acids and fatty acids. It accelerates glycolysis, the pentose phosphate cycle, and glycogen synthesis in liver. The protein is Insulin (INS) of Chlorocebus aethiops (Green monkey).